The chain runs to 210 residues: Large ribosomal subunit protein bL17 (210 aa).

The disordered stretch occupies residues 177-210 (TRSAQRPAFEQDAPESDSAPEAEAKTEEETASAN).

This sequence belongs to the bacterial ribosomal protein bL17 family. Part of the 50S ribosomal subunit. Contacts protein L32.

The polypeptide is Large ribosomal subunit protein bL17 (Rhodopirellula baltica (strain DSM 10527 / NCIMB 13988 / SH1)).